Reading from the N-terminus, the 367-residue chain is Chorismate synthase (367 aa).

Arginine 48 contacts NADP(+). Residues 125–127 (RSS), 241–242 (NA), glycine 285, 300–304 (KPTSS), and arginine 326 contribute to the FMN site.

It belongs to the chorismate synthase family. As to quaternary structure, homotetramer. Requires FMNH2 as cofactor.

The enzyme catalyses 5-O-(1-carboxyvinyl)-3-phosphoshikimate = chorismate + phosphate. Its pathway is metabolic intermediate biosynthesis; chorismate biosynthesis; chorismate from D-erythrose 4-phosphate and phosphoenolpyruvate: step 7/7. Functionally, catalyzes the anti-1,4-elimination of the C-3 phosphate and the C-6 proR hydrogen from 5-enolpyruvylshikimate-3-phosphate (EPSP) to yield chorismate, which is the branch point compound that serves as the starting substrate for the three terminal pathways of aromatic amino acid biosynthesis. This reaction introduces a second double bond into the aromatic ring system. The chain is Chorismate synthase from Dinoroseobacter shibae (strain DSM 16493 / NCIMB 14021 / DFL 12).